We begin with the raw amino-acid sequence, 440 residues long: APO protein 2, chloroplastic (440 aa).

A chloroplast-targeting transit peptide spans 1–62; sequence MSITYSAISF…SLQLNSRVVL (62 aa). The span at 106-115 shows a compositional bias: basic and acidic residues; the sequence is ARERVKNNKD. The segment at 106-126 is disordered; that stretch reads ARERVKNNKDKPKRPLPPPKN. 2 APO domains span residues 162 to 247 and 332 to 417; these read ACGW…EIPE and VCGY…VVPE.

It belongs to the APO family.

It localises to the plastid. The protein localises to the chloroplast. Its function is as follows. May be involved in the stable assembly of several 4Fe-4S cluster-containing complexes of chloroplasts. This chain is APO protein 2, chloroplastic (APO2), found in Arabidopsis thaliana (Mouse-ear cress).